The chain runs to 90 residues: UPF0729 protein Bm1_03610 (90 aa).

This sequence belongs to the UPF0729 family.

The chain is UPF0729 protein Bm1_03610 from Brugia malayi (Filarial nematode worm).